A 287-amino-acid polypeptide reads, in one-letter code: Co-chaperone protein DjlA (287 aa).

Over 1–6 (MNFIGK) the chain is Periplasmic. A helical membrane pass occupies residues 7-30 (FLGLIIGWKLGGFFGAICGVILGH). The Cytoplasmic segment spans residues 31–287 (LGDKKLYELG…DLICKTKGWK (257 aa)). Positions 221 to 287 (DAYKVLGVSA…DLICKTKGWK (67 aa)) constitute a J domain.

As to quaternary structure, homodimer.

Its subcellular location is the cell inner membrane. Functionally, regulatory DnaK co-chaperone. Direct interaction between DnaK and DjlA is needed for the induction of the wcaABCDE operon, involved in the synthesis of a colanic acid polysaccharide capsule, possibly through activation of the RcsB/RcsC phosphotransfer signaling pathway. The colanic acid capsule may help the bacterium survive conditions outside the host. This Pasteurella multocida (strain Pm70) protein is Co-chaperone protein DjlA.